Here is a 407-residue protein sequence, read N- to C-terminus: Bifunctional enzyme IspD/IspF (407 aa).

Residues 1–246 (MTEASENASA…SSERTHFPDI (246 aa)) are 2-C-methyl-D-erythritol 4-phosphate cytidylyltransferase. Residues 247–407 (RTGNGYDVHA…SVVFPGEVPE (161 aa)) are 2-C-methyl-D-erythritol 2,4-cyclodiphosphate synthase. A divalent metal cation contacts are provided by Asp253 and His255. Residues 253–255 (DVH) and 279–280 (HS) contribute to the 4-CDP-2-C-methyl-D-erythritol 2-phosphate site. His287 serves as a coordination point for a divalent metal cation. Residues 301–303 (DIG), 377–380 (TTNE), Phe384, and Arg387 contribute to the 4-CDP-2-C-methyl-D-erythritol 2-phosphate site.

In the N-terminal section; belongs to the IspD/TarI cytidylyltransferase family. IspD subfamily. It in the C-terminal section; belongs to the IspF family. A divalent metal cation serves as cofactor.

It carries out the reaction 2-C-methyl-D-erythritol 4-phosphate + CTP + H(+) = 4-CDP-2-C-methyl-D-erythritol + diphosphate. It catalyses the reaction 4-CDP-2-C-methyl-D-erythritol 2-phosphate = 2-C-methyl-D-erythritol 2,4-cyclic diphosphate + CMP. It functions in the pathway isoprenoid biosynthesis; isopentenyl diphosphate biosynthesis via DXP pathway; isopentenyl diphosphate from 1-deoxy-D-xylulose 5-phosphate: step 2/6. The protein operates within isoprenoid biosynthesis; isopentenyl diphosphate biosynthesis via DXP pathway; isopentenyl diphosphate from 1-deoxy-D-xylulose 5-phosphate: step 4/6. Its function is as follows. Bifunctional enzyme that catalyzes the formation of 4-diphosphocytidyl-2-C-methyl-D-erythritol from CTP and 2-C-methyl-D-erythritol 4-phosphate (MEP) (IspD), and catalyzes the conversion of 4-diphosphocytidyl-2-C-methyl-D-erythritol 2-phosphate (CDP-ME2P) to 2-C-methyl-D-erythritol 2,4-cyclodiphosphate (ME-CPP) with a corresponding release of cytidine 5-monophosphate (CMP) (IspF). This chain is Bifunctional enzyme IspD/IspF, found in Mesorhizobium japonicum (strain LMG 29417 / CECT 9101 / MAFF 303099) (Mesorhizobium loti (strain MAFF 303099)).